A 350-amino-acid chain; its full sequence is GTPase Obg (350 aa).

In terms of domain architecture, Obg spans 1–159 (MKFIDEAKIT…WELALELKVL (159 aa)). A disordered region spans residues 17-43 (GDGSASFRREKYIPKGGPDGGDGGRGG). Positions 33-43 (GPDGGDGGRGG) are enriched in gly residues. Positions 160-334 (ADVGLLGMPN…LTYAVMDYLG (175 aa)) constitute an OBG-type G domain. GTP is bound by residues 166 to 173 (GMPNAGKS), 191 to 195 (FTTLA), 213 to 216 (DIPG), 284 to 287 (NKLD), and 315 to 317 (SAL). Residues serine 173 and threonine 193 each coordinate Mg(2+).

This sequence belongs to the TRAFAC class OBG-HflX-like GTPase superfamily. OBG GTPase family. In terms of assembly, monomer. The cofactor is Mg(2+).

Its subcellular location is the cytoplasm. Functionally, an essential GTPase which binds GTP, GDP and possibly (p)ppGpp with moderate affinity, with high nucleotide exchange rates and a fairly low GTP hydrolysis rate. Plays a role in control of the cell cycle, stress response, ribosome biogenesis and in those bacteria that undergo differentiation, in morphogenesis control. This is GTPase Obg from Thiobacillus denitrificans (strain ATCC 25259 / T1).